The following is a 418-amino-acid chain: UDP-N-acetylglucosamine 1-carboxyvinyltransferase 2 (418 aa).

22–23 provides a ligand contact to phosphoenolpyruvate; that stretch reads KN. Arg-93 serves as a coordination point for UDP-N-acetyl-alpha-D-glucosamine. The Proton donor role is filled by Cys-117. At Cys-117 the chain carries 2-(S-cysteinyl)pyruvic acid O-phosphothioketal. UDP-N-acetyl-alpha-D-glucosamine is bound by residues 122–126, Asp-305, and Ile-327; that span reads RPIDQ.

It belongs to the EPSP synthase family. MurA subfamily.

Its subcellular location is the cytoplasm. It carries out the reaction phosphoenolpyruvate + UDP-N-acetyl-alpha-D-glucosamine = UDP-N-acetyl-3-O-(1-carboxyvinyl)-alpha-D-glucosamine + phosphate. Its pathway is cell wall biogenesis; peptidoglycan biosynthesis. Its function is as follows. Cell wall formation. Adds enolpyruvyl to UDP-N-acetylglucosamine. This Clostridium acetobutylicum (strain ATCC 824 / DSM 792 / JCM 1419 / IAM 19013 / LMG 5710 / NBRC 13948 / NRRL B-527 / VKM B-1787 / 2291 / W) protein is UDP-N-acetylglucosamine 1-carboxyvinyltransferase 2.